Consider the following 274-residue polypeptide: MKKYLLGIGLILALIACKQNVSSLDEKNSVSVDLPGGMTVLVSKEKDKDGKYSLDATVDKLELKGTSDKNNGSGTLEGEKTDKSKVKLTIADDLSQTKFEIFKEDGKTLVSKKVTLKDKSSTEEKFNEKGETSEKTIVRANGTRLEYTDIKSDGSGKAKEVLKDFTLEGTLAADGKTTLKVTEGTVVLSKNILKSGEITVALDDSDTTQATKKTGNWDSKSSTLTISVNSQKTKNLVFTKEDTITVQKYDSAGTNLEGKAVEITTLKELKAALK.

The signal sequence occupies residues 1-16 (MKKYLLGIGLILALIA). Residue C17 is the site of N-palmitoyl cysteine attachment. C17 carries S-diacylglycerol cysteine lipidation.

It belongs to the OspA lipoprotein family.

The protein resides in the cell outer membrane. The protein localises to the cell surface. The sequence is that of Outer surface protein A from Borreliella burgdorferi (Lyme disease spirochete).